The primary structure comprises 173 residues: Ribosome maturation factor RimM (173 aa).

A PRC barrel domain is found at Glu-97–Leu-170.

It belongs to the RimM family. As to quaternary structure, binds ribosomal protein uS19.

It localises to the cytoplasm. Its function is as follows. An accessory protein needed during the final step in the assembly of 30S ribosomal subunit, possibly for assembly of the head region. Essential for efficient processing of 16S rRNA. May be needed both before and after RbfA during the maturation of 16S rRNA. It has affinity for free ribosomal 30S subunits but not for 70S ribosomes. The sequence is that of Ribosome maturation factor RimM from Shouchella clausii (strain KSM-K16) (Alkalihalobacillus clausii).